The sequence spans 862 residues: Cone cGMP-specific 3',5'-cyclic phosphodiesterase subunit alpha' (862 aa).

GAF domains are found at residues 75–224 (SMEK…SLVL) and 256–433 (DIER…GWSV). Residues Ser97, Asn116, 169-172 (DKKT), and Thr176 each bind 3',5'-cyclic GMP. One can recognise a PDEase domain in the interval 486–819 (DEKDLIRILK…VEWKTRADEY (334 aa)). His562 functions as the Proton donor in the catalytic mechanism. A divalent metal cation contacts are provided by His566, His602, Asp603, and Asp723. Residues 830-842 (KKKEEEAAAKKAE) are compositionally biased toward basic and acidic residues. Residues 830–862 (KKKEEEAAAKKAENAAGGGGGGEDGKSKTCIVL) are disordered. Cys859 bears the Cysteine methyl ester mark. Residue Cys859 is the site of S-geranylgeranyl cysteine attachment. Positions 860 to 862 (IVL) are cleaved as a propeptide — removed in mature form.

Belongs to the cyclic nucleotide phosphodiesterase family. Composed of two alpha' subunits that are associated with 3 smaller proteins of 11, 13, and 15 kDa. The cofactor is a divalent metal cation.

It localises to the cell membrane. It carries out the reaction 3',5'-cyclic GMP + H2O = GMP + H(+). Functionally, as cone-specific cGMP phosphodiesterase, it plays an essential role in light detection and cone phototransduction by rapidly decreasing intracellular levels of cGMP. This is Cone cGMP-specific 3',5'-cyclic phosphodiesterase subunit alpha' (PDE6C) from Gallus gallus (Chicken).